The primary structure comprises 135 residues: Ribonuclease P protein component (135 aa).

The protein belongs to the RnpA family. In terms of assembly, consists of a catalytic RNA component (M1 or rnpB) and a protein subunit.

It carries out the reaction Endonucleolytic cleavage of RNA, removing 5'-extranucleotides from tRNA precursor.. Functionally, RNaseP catalyzes the removal of the 5'-leader sequence from pre-tRNA to produce the mature 5'-terminus. It can also cleave other RNA substrates such as 4.5S RNA. The protein component plays an auxiliary but essential role in vivo by binding to the 5'-leader sequence and broadening the substrate specificity of the ribozyme. The polypeptide is Ribonuclease P protein component (Pseudomonas aeruginosa (strain ATCC 15692 / DSM 22644 / CIP 104116 / JCM 14847 / LMG 12228 / 1C / PRS 101 / PAO1)).